The sequence spans 212 residues: Imidazole glycerol phosphate synthase subunit HisH 2 (212 aa).

The 208-residue stretch at 4-211 (HLGLIDYGMG…LDWLQRGAPI (208 aa)) folds into the Glutamine amidotransferase type-1 domain. The Nucleophile role is filled by Cys-82. Active-site residues include His-186 and Glu-188.

Heterodimer of HisH and HisF.

It localises to the cytoplasm. It catalyses the reaction 5-[(5-phospho-1-deoxy-D-ribulos-1-ylimino)methylamino]-1-(5-phospho-beta-D-ribosyl)imidazole-4-carboxamide + L-glutamine = D-erythro-1-(imidazol-4-yl)glycerol 3-phosphate + 5-amino-1-(5-phospho-beta-D-ribosyl)imidazole-4-carboxamide + L-glutamate + H(+). The catalysed reaction is L-glutamine + H2O = L-glutamate + NH4(+). It participates in amino-acid biosynthesis; L-histidine biosynthesis; L-histidine from 5-phospho-alpha-D-ribose 1-diphosphate: step 5/9. IGPS catalyzes the conversion of PRFAR and glutamine to IGP, AICAR and glutamate. The HisH subunit provides the glutamine amidotransferase activity that produces the ammonia necessary to HisF for the synthesis of IGP and AICAR. This is Imidazole glycerol phosphate synthase subunit HisH 2 (hisH2) from Parasynechococcus marenigrum (strain WH8102).